Consider the following 408-residue polypeptide: Serine/threonine transporter SstT (408 aa).

The next 9 membrane-spanning stretches (helical) occupy residues 11 to 31, 43 to 63, 81 to 101, 141 to 161, 192 to 212, 216 to 236, 298 to 318, 330 to 350, and 357 to 377; these read LANG…VILA, FLGS…VFIL, PIVV…VVLS, ALMT…GLAL, IGIF…AIAG, LLAV…PLIV, MGGA…TLGI, VVAA…LLLI, and FGIS…IGVI.

This sequence belongs to the dicarboxylate/amino acid:cation symporter (DAACS) (TC 2.A.23) family.

The protein resides in the cell inner membrane. It catalyses the reaction L-serine(in) + Na(+)(in) = L-serine(out) + Na(+)(out). It carries out the reaction L-threonine(in) + Na(+)(in) = L-threonine(out) + Na(+)(out). In terms of biological role, involved in the import of serine and threonine into the cell, with the concomitant import of sodium (symport system). The protein is Serine/threonine transporter SstT of Shewanella sp. (strain W3-18-1).